The chain runs to 969 residues: Probable Rho-type GTPase-activating protein 3 (969 aa).

2 LIM zinc-binding domains span residues T17–C81 and H76–S135. Disordered stretches follow at residues I170–L223, A348–L459, and T613–L646. Over residues E193 to E202 the composition is skewed to polar residues. 2 stretches are compositionally biased toward low complexity: residues D212 to L223 and S350 to S361. Composition is skewed to polar residues over residues T369 to Q392 and L418 to S432. Basic and acidic residues predominate over residues S450–L459. The span at T613–N623 shows a compositional bias: low complexity. Residues P624–G637 show a composition bias toward polar residues. The Phorbol-ester/DAG-type zinc-finger motif lies at D697–S744. In terms of domain architecture, Rho-GAP spans R780–L966.

In terms of assembly, interacts with dil1.

The protein localises to the cell tip. In terms of biological role, GTPase-activating protein for Rho-type proteins. In Schizosaccharomyces pombe (strain 972 / ATCC 24843) (Fission yeast), this protein is Probable Rho-type GTPase-activating protein 3 (rga3).